A 108-amino-acid polypeptide reads, in one-letter code: UPF0060 membrane protein Sputw3181_1172 (108 aa).

4 helical membrane passes run 3–23, 31–51, 63–83, and 87–107; these read VITT…GCYL, GASA…AWLL, AAYG…VDGI, and RWDL…MFAP.

This sequence belongs to the UPF0060 family.

The protein resides in the cell inner membrane. The polypeptide is UPF0060 membrane protein Sputw3181_1172 (Shewanella sp. (strain W3-18-1)).